Consider the following 316-residue polypeptide: Probable peptidyl-tRNA hydrolase 2 (316 aa).

Residues 1 to 127 form a disordered region; the sequence is MSENIPDIDP…SHPVDPQEPN (127 aa). Residues 44–53 are compositionally biased toward polar residues; that stretch reads PTPSSVTVDN. The span at 75–89 shows a compositional bias: low complexity; the sequence is IPEVPIPSSAISISS. In terms of domain architecture, UBA spans 128–169; it reads EVNNEYLAHLLDLGFDEYTAVLALKRTNSAGVEQAVAWIVER. A disordered region spans residues 170-193; sequence SNESDFDEDSSSSENEADEEMGAV. Positions 173-190 are enriched in acidic residues; it reads SDFDEDSSSSENEADEEM.

Belongs to the PTH2 family.

The enzyme catalyses an N-acyl-L-alpha-aminoacyl-tRNA + H2O = an N-acyl-L-amino acid + a tRNA + H(+). Its function is as follows. The natural substrate for this enzyme may be peptidyl-tRNAs which drop off the ribosome during protein synthesis. The chain is Probable peptidyl-tRNA hydrolase 2 from Caenorhabditis elegans.